A 284-amino-acid polypeptide reads, in one-letter code: uncharacterized protein (284 aa).

Positions 1–21 (MKTTMLMLVLLVCSYIHYVCA) are cleaved as a signal peptide. Helical transmembrane passes span 88-108 (AGPFAISQVFGPAGRLYFLWA), 144-164 (ALGVYPYVPTLTGFSTFLGVW), and 212-232 (VFTTFAGPPIATSTVFASPTY).

Its subcellular location is the membrane. This is an uncharacterized protein from Schizosaccharomyces pombe (strain 972 / ATCC 24843) (Fission yeast).